We begin with the raw amino-acid sequence, 855 residues long: Inactive rhomboid protein 1 (855 aa).

The Cytoplasmic segment spans residues Met-1–Thr-411. A phosphoserine mark is found at Ser-76 and Ser-176. Thr-180 and Thr-183 each carry phosphothreonine. At Ser-390 the chain carries Phosphoserine. The chain crosses the membrane as a helical span at residues Phe-412–Phe-432. Residues Ser-433–Arg-655 are Lumenal-facing. N-linked (GlcNAc...) asparagine glycosylation occurs at Asn-583. Residues Leu-656–Gln-676 form a helical membrane-spanning segment. The Cytoplasmic segment spans residues Met-677–Arg-691. The helical transmembrane segment at Ile-692 to Pro-712 threads the bilayer. The Lumenal portion of the chain corresponds to Tyr-713–Arg-714. A helical transmembrane segment spans residues Ala-715–Phe-735. At Gln-736 to Arg-746 the chain is on the cytoplasmic side. Residues Ala-747 to Ile-767 form a helical membrane-spanning segment. At Asp-768 to His-772 the chain is on the lumenal side. Residues Ile-773–Gly-793 form a helical membrane-spanning segment. Residues Lys-794 to Gln-803 lie on the Cytoplasmic side of the membrane. The helical transmembrane segment at Ile-804 to Val-824 threads the bilayer. Residues Tyr-825–His-855 are Lumenal-facing.

Belongs to the peptidase S54 family. In terms of assembly, homodimer, or homooligomer. Interacts with TGFA and HBEGF. Interacts with EGF; may retain EGF in the endoplasmic reticulum and regulates its degradation through the endoplasmic reticulum-associated degradation (ERAD). Interacts (via cytoplasmic N-terminus) with FRMD8/iTAP; this interaction leads to mutual protein stabilization. Interacts with ADAM17/TACE. In terms of processing, N-glycosylated. In terms of tissue distribution, highly expressed in cerebellum, cerebrum, heart, skeletal muscle, placenta, pancreatic islet and testis. Detected at lower levels in colon, kidney, small intestine and lung.

It localises to the endoplasmic reticulum membrane. The protein localises to the golgi apparatus membrane. Its function is as follows. Regulates ADAM17 protease, a sheddase of the epidermal growth factor (EGF) receptor ligands and TNF, thereby plays a role in sleep, cell survival, proliferation, migration and inflammation. Does not exhibit any protease activity on its own. This chain is Inactive rhomboid protein 1 (RHBDF1), found in Homo sapiens (Human).